The following is a 274-amino-acid chain: Diaminopimelate epimerase (274 aa).

2 residues coordinate substrate: Asn-11 and Asn-76. Cys-85 (proton donor) is an active-site residue. Substrate-binding positions include 86–87, Asn-157, Asn-189, and 207–208; these read GN and ER. The active-site Proton acceptor is Cys-216. 217-218 lines the substrate pocket; sequence GT.

The protein belongs to the diaminopimelate epimerase family. Homodimer.

It localises to the cytoplasm. It carries out the reaction (2S,6S)-2,6-diaminopimelate = meso-2,6-diaminopimelate. It functions in the pathway amino-acid biosynthesis; L-lysine biosynthesis via DAP pathway; DL-2,6-diaminopimelate from LL-2,6-diaminopimelate: step 1/1. Functionally, catalyzes the stereoinversion of LL-2,6-diaminopimelate (L,L-DAP) to meso-diaminopimelate (meso-DAP), a precursor of L-lysine and an essential component of the bacterial peptidoglycan. This chain is Diaminopimelate epimerase, found in Thermobifida fusca (strain YX).